Reading from the N-terminus, the 253-residue chain is Indole-3-glycerol phosphate synthase (253 aa).

Belongs to the TrpC family.

The catalysed reaction is 1-(2-carboxyphenylamino)-1-deoxy-D-ribulose 5-phosphate + H(+) = (1S,2R)-1-C-(indol-3-yl)glycerol 3-phosphate + CO2 + H2O. It functions in the pathway amino-acid biosynthesis; L-tryptophan biosynthesis; L-tryptophan from chorismate: step 4/5. The polypeptide is Indole-3-glycerol phosphate synthase (Bacillus cereus (strain AH187)).